A 239-amino-acid polypeptide reads, in one-letter code: tRNA (guanine-N(1)-)-methyltransferase (239 aa).

Residues Gly115 and 134–139 (MGDFVL) contribute to the S-adenosyl-L-methionine site. The interval 210–239 (QQQREQRTQERRPDLWNRWQQIQNPTPPAP) is disordered. Residues 211-224 (QQREQRTQERRPDL) are compositionally biased toward basic and acidic residues.

Belongs to the RNA methyltransferase TrmD family. Homodimer.

The protein resides in the cytoplasm. It catalyses the reaction guanosine(37) in tRNA + S-adenosyl-L-methionine = N(1)-methylguanosine(37) in tRNA + S-adenosyl-L-homocysteine + H(+). In terms of biological role, specifically methylates guanosine-37 in various tRNAs. The protein is tRNA (guanine-N(1)-)-methyltransferase of Synechococcus sp. (strain CC9311).